Consider the following 589-residue polypeptide: Guanylate-binding protein 2 (589 aa).

The tract at residues 1 to 309 (MASEIHMSEP…GAISNGSLPC (309 aa)) is GTPase domain (Globular). Residues 35-276 (TQPVVVVAIV…FTSYILSYSS (242 aa)) form the GB1/RHD3-type G domain. GTP contacts are provided by residues 45–52 (GLYRTGKS), 181–182 (RD), and L245. Cysteine methyl ester is present on C586. A lipid anchor (S-geranylgeranyl cysteine) is attached at C586. A propeptide spans 587–589 (TIL) (removed in mature form).

Belongs to the TRAFAC class dynamin-like GTPase superfamily. GB1/RHD3 GTPase family. GB1 subfamily. In terms of assembly, homodimer; homodimerization occurs upon GTP-binding and is required for the association with membranous structures. Heterodimer with other family members, including GBP1, GBP3, GBP4 and GBP5. Post-translationally, isoprenylation is required for proper subcellular location.

It localises to the cytoplasmic vesicle membrane. The protein resides in the golgi apparatus membrane. The protein localises to the cytoplasm. Its subcellular location is the perinuclear region. It catalyses the reaction GTP + H2O = GDP + phosphate + H(+). Interferon (IFN)-inducible GTPase that plays important roles in innate immunity against a diverse range of bacterial, viral and protozoan pathogens. Hydrolyzes GTP to GMP in 2 consecutive cleavage reactions, but the major reaction product is GDP. Following infection, recruited to the pathogen-containing vacuoles or vacuole-escaped bacteria and acts as a positive regulator of inflammasome assembly by promoting the release of inflammasome ligands from bacteria. Acts by promoting lysis of pathogen-containing vacuoles, releasing pathogens into the cytosol. Following pathogen release in the cytosol, promotes recruitment of proteins that mediate bacterial cytolysis, such as Gm12250/Irgb10: this liberates ligands that are detected by inflammasomes, such as lipopolysaccharide (LPS) that activates the non-canonical CASP4/CASP11 inflammasome or double-stranded DNA (dsDNA) that activates the AIM2 inflammasome. Confers protection to the protozoan pathogen Toxoplasma gondii. Independently of its GTPase activity, acts as an inhibitor of various viruses infectivity by inhibiting FURIN-mediated maturation of viral envelope proteins. The sequence is that of Guanylate-binding protein 2 from Mus musculus (Mouse).